Reading from the N-terminus, the 210-residue chain is Probable GTP-binding protein EngB (210 aa).

One can recognise an EngB-type G domain in the interval 25 to 199 (CGIEVAFAGR…RQKLDSWFSE (175 aa)). GTP contacts are provided by residues 33-40 (GRSNAGKS), 60-64 (GRTQL), 78-81 (DLPG), 145-148 (TKAD), and 178-180 (FSS). Mg(2+)-binding residues include serine 40 and threonine 62.

Belongs to the TRAFAC class TrmE-Era-EngA-EngB-Septin-like GTPase superfamily. EngB GTPase family. It depends on Mg(2+) as a cofactor.

Functionally, necessary for normal cell division and for the maintenance of normal septation. This is Probable GTP-binding protein EngB from Salmonella agona (strain SL483).